The chain runs to 329 residues: Replication factor C small subunit 1 (329 aa).

Position 44–51 (44–51 (GPPGTGKT)) interacts with ATP.

The protein belongs to the activator 1 small subunits family. RfcS subfamily. As to quaternary structure, heteromultimer composed of small subunits (RfcS) and large subunits (RfcL).

Part of the RFC clamp loader complex which loads the PCNA sliding clamp onto DNA. The polypeptide is Replication factor C small subunit 1 (Pyrobaculum islandicum (strain DSM 4184 / JCM 9189 / GEO3)).